The primary structure comprises 436 residues: Serine hydroxymethyltransferase (436 aa).

(6S)-5,6,7,8-tetrahydrofolate-binding positions include leucine 133 and 137-139 (GHI). Lysine 242 bears the N6-(pyridoxal phosphate)lysine mark.

This sequence belongs to the SHMT family. Homodimer. Pyridoxal 5'-phosphate is required as a cofactor.

It localises to the cytoplasm. The catalysed reaction is (6R)-5,10-methylene-5,6,7,8-tetrahydrofolate + glycine + H2O = (6S)-5,6,7,8-tetrahydrofolate + L-serine. It participates in one-carbon metabolism; tetrahydrofolate interconversion. Its pathway is amino-acid biosynthesis; glycine biosynthesis; glycine from L-serine: step 1/1. Catalyzes the reversible interconversion of serine and glycine with tetrahydrofolate (THF) serving as the one-carbon carrier. This reaction serves as the major source of one-carbon groups required for the biosynthesis of purines, thymidylate, methionine, and other important biomolecules. Also exhibits THF-independent aldolase activity toward beta-hydroxyamino acids, producing glycine and aldehydes, via a retro-aldol mechanism. The sequence is that of Serine hydroxymethyltransferase from Pelagibacter ubique (strain HTCC1062).